The following is a 151-amino-acid chain: UPF0178 protein Shal_3046 (151 aa).

This sequence belongs to the UPF0178 family.

The chain is UPF0178 protein Shal_3046 from Shewanella halifaxensis (strain HAW-EB4).